The primary structure comprises 125 residues: Holo-[acyl-carrier-protein] synthase (125 aa).

Mg(2+) contacts are provided by Asp8 and Glu57.

It belongs to the P-Pant transferase superfamily. AcpS family. Requires Mg(2+) as cofactor.

The protein resides in the cytoplasm. The catalysed reaction is apo-[ACP] + CoA = holo-[ACP] + adenosine 3',5'-bisphosphate + H(+). Functionally, transfers the 4'-phosphopantetheine moiety from coenzyme A to a Ser of acyl-carrier-protein. The polypeptide is Holo-[acyl-carrier-protein] synthase (Halothermothrix orenii (strain H 168 / OCM 544 / DSM 9562)).